The following is a 204-amino-acid chain: MKVVAFERQQQGTGASRRLRNAGKTTGIVYGGEVAPQMIELDHNALWHALKKEAFHSSILDLEVAGKSQRVLLRDVQYHPFRQLVLHVDFQRIDPKKKLHTKAPLHFLNAETSPAVKLSSAVVSHVVTEIEIECLPADLPEFLEVDLSKIEAGQSLHAKDIALPNGVALTAHVDAENPVIASATIPAGAVSDEAAAGEGETPAA.

It belongs to the bacterial ribosomal protein bL25 family. CTC subfamily. Part of the 50S ribosomal subunit; part of the 5S rRNA/L5/L18/L25 subcomplex. Contacts the 5S rRNA. Binds to the 5S rRNA independently of L5 and L18.

This is one of the proteins that binds to the 5S RNA in the ribosome where it forms part of the central protuberance. The polypeptide is Large ribosomal subunit protein bL25 (Burkholderia pseudomallei (strain 668)).